Here is a 528-residue protein sequence, read N- to C-terminus: DEAD-box ATP-dependent RNA helicase 6 (528 aa).

Composition is skewed to low complexity over residues 1–15 (MNNNNNNRGRFPPGI) and 65–80 (QQYVQRGYPQQIQQQQ). Residues 1 to 80 (MNNNNNNRGR…GYPQQIQQQQ (80 aa)) are disordered. Residues 154–182 (NEFEDYFLKRDLLRGIYEKGFEKPSPIQE) carry the Q motif motif. A Helicase ATP-binding domain is found at 185 to 355 (IPIALTGSDI…DRYLKKPYII (171 aa)). 198–205 (AKNGTGKT) serves as a coordination point for ATP. Phosphothreonine is present on Thr260. A DEAD box motif is present at residues 303–306 (DEAD). The Helicase C-terminal domain maps to 365-525 (GVTQYYAFVE…PIPSLIDKAI (161 aa)).

The protein belongs to the DEAD box helicase family. DDX6/DHH1 subfamily.

The protein resides in the cytoplasm. The protein localises to the P-body. The catalysed reaction is ATP + H2O = ADP + phosphate + H(+). Functionally, ATP-dependent RNA helicase involved in mRNA turnover, and more specifically in mRNA decapping. In Arabidopsis thaliana (Mouse-ear cress), this protein is DEAD-box ATP-dependent RNA helicase 6 (RH6).